A 292-amino-acid polypeptide reads, in one-letter code: MKSKPDWLKVKMPTGSAFYEMRNLMKLHKLNTVCEEAACPNIGECWNKKHATVMILGSTCTRACAFCNVASGIPDKLDPHEPQSLAKAVSSLKLQHVVITSVDRDDLEDGGAGHFVECIEEIRKRDSNVTIEILTPDFLNKHDAIDKIAKAFPDVYNHNVETVPRLYAKIRPKARYFHSLYLLKTIKQKNPRIFTKSGIMVGLGELKEEIYQVMDDLRSADVDFIVIGQYLQPTSKHAVVDRYVTPEEFDHYKYVAYSKGFLMVASGPLVRSSYHAEEDFQRLKKNRAAMYT.

Residues Cys34, Cys39, Cys45, Cys60, Cys64, Cys67, and Ser273 each coordinate [4Fe-4S] cluster. Residues Trp46–Leu262 form the Radical SAM core domain.

This sequence belongs to the radical SAM superfamily. Lipoyl synthase family. Requires [4Fe-4S] cluster as cofactor.

The protein localises to the cytoplasm. It carries out the reaction [[Fe-S] cluster scaffold protein carrying a second [4Fe-4S](2+) cluster] + N(6)-octanoyl-L-lysyl-[protein] + 2 oxidized [2Fe-2S]-[ferredoxin] + 2 S-adenosyl-L-methionine + 4 H(+) = [[Fe-S] cluster scaffold protein] + N(6)-[(R)-dihydrolipoyl]-L-lysyl-[protein] + 4 Fe(3+) + 2 hydrogen sulfide + 2 5'-deoxyadenosine + 2 L-methionine + 2 reduced [2Fe-2S]-[ferredoxin]. The protein operates within protein modification; protein lipoylation via endogenous pathway; protein N(6)-(lipoyl)lysine from octanoyl-[acyl-carrier-protein]: step 2/2. In terms of biological role, catalyzes the radical-mediated insertion of two sulfur atoms into the C-6 and C-8 positions of the octanoyl moiety bound to the lipoyl domains of lipoate-dependent enzymes, thereby converting the octanoylated domains into lipoylated derivatives. This is Lipoyl synthase from Ehrlichia ruminantium (strain Welgevonden).